We begin with the raw amino-acid sequence, 430 residues long: Small ribosomal subunit protein uS3m (430 aa).

Belongs to the universal ribosomal protein uS3 family.

It is found in the mitochondrion. The polypeptide is Small ribosomal subunit protein uS3m (RPS3) (Marchantia polymorpha (Common liverwort)).